The following is a 671-amino-acid chain: DNA ligase (671 aa).

Residues 36–40, 85–86, and Glu-115 each bind NAD(+); these read DHVYD and SM. The active-site N6-AMP-lysine intermediate is Lys-117. Residues Arg-138, Glu-172, Lys-287, and Lys-311 each contribute to the NAD(+) site. Residues Cys-405, Cys-408, Cys-423, and Cys-428 each coordinate Zn(2+). Residues 588 to 671 enclose the BRCT domain; it reads AADNFFKGKT…SKIEEKDTEK (84 aa).

It belongs to the NAD-dependent DNA ligase family. LigA subfamily. The cofactor is Mg(2+). Mn(2+) is required as a cofactor.

The enzyme catalyses NAD(+) + (deoxyribonucleotide)n-3'-hydroxyl + 5'-phospho-(deoxyribonucleotide)m = (deoxyribonucleotide)n+m + AMP + beta-nicotinamide D-nucleotide.. In terms of biological role, DNA ligase that catalyzes the formation of phosphodiester linkages between 5'-phosphoryl and 3'-hydroxyl groups in double-stranded DNA using NAD as a coenzyme and as the energy source for the reaction. It is essential for DNA replication and repair of damaged DNA. The chain is DNA ligase from Lactobacillus delbrueckii subsp. bulgaricus (strain ATCC 11842 / DSM 20081 / BCRC 10696 / JCM 1002 / NBRC 13953 / NCIMB 11778 / NCTC 12712 / WDCM 00102 / Lb 14).